Reading from the N-terminus, the 419-residue chain is Zinc finger protein Pegasus (419 aa).

A Glycyl lysine isopeptide (Lys-Gly) (interchain with G-Cter in SUMO2) cross-link involves residue Lys5. 3 consecutive C2H2-type zinc fingers follow at residues 82 to 104 (LKCR…IRIH), 110 to 132 (HRCH…MRSH), and 138 to 161 (YKCE…RRKH). Lys185 is covalently cross-linked (Glycyl lysine isopeptide (Lys-Gly) (interchain with G-Cter in SUMO2)). Composition is skewed to polar residues over residues 223–236 (QTDS…TTPT) and 262–273 (LSSLPPENQNPA). Disordered stretches follow at residues 223–247 (QTDS…QELM) and 262–356 (LSSL…PALP). The span at 290–311 (QPSTQAVVSAVSASIPQSSSPT) shows a compositional bias: low complexity. The span at 332–349 (SEPSAHTSTPSIGNSQPS) shows a compositional bias: polar residues. 2 C2H2-type zinc fingers span residues 364–386 (HHCQ…MGCH) and 392–416 (FQCN…RGQH).

This sequence belongs to the Ikaros C2H2-type zinc-finger protein family. Self-associates. Interacts with other family members; IKZF1, IKZF2, IKZF3 and IKZF4. Expressed in brain, heart, skeletal muscle, kidney, and liver. Expressed in the hematopoietic cell lines MOLT-4, NALM-6 and K-562. Highly expressed in THP-1 and M-07e cell lines, which have characteristics of myeloid and early megakaryocytic cells respectively.

It localises to the nucleus. Functionally, transcriptional repressor that binds the core 5'GNNTGTNG-3' DNA consensus sequence. Involved in megakaryocyte differentiation. This Homo sapiens (Human) protein is Zinc finger protein Pegasus (IKZF5).